The following is a 383-amino-acid chain: uncharacterized protein (383 aa).

2 disordered regions span residues 27-66 (ENNN…NKKP) and 242-281 (LITT…ITRR). Low complexity-rich tracts occupy residues 28-63 (NNNT…NNNN) and 242-275 (LITT…KSSS).

This is an uncharacterized protein from Dictyostelium discoideum (Social amoeba).